We begin with the raw amino-acid sequence, 210 residues long: Cytochrome c biogenesis ATP-binding export protein CcmA (210 aa).

In terms of domain architecture, ABC transporter spans 1–208 (MHLNQLVISH…KVRTLSLDQF (208 aa)). 38–45 (GHNGIGKT) is a binding site for ATP.

It belongs to the ABC transporter superfamily. CcmA exporter (TC 3.A.1.107) family. As to quaternary structure, the complex is composed of two ATP-binding proteins (CcmA) and two transmembrane proteins (CcmB).

It localises to the cell inner membrane. It carries out the reaction heme b(in) + ATP + H2O = heme b(out) + ADP + phosphate + H(+). Part of the ABC transporter complex CcmAB involved in the biogenesis of c-type cytochromes; once thought to export heme, this seems not to be the case, but its exact role is uncertain. Responsible for energy coupling to the transport system. The protein is Cytochrome c biogenesis ATP-binding export protein CcmA of Haemophilus ducreyi (strain 35000HP / ATCC 700724).